We begin with the raw amino-acid sequence, 91 residues long: Acylphosphatase (91 aa).

Residues 3-91 (CLRAIVKGKV…ANYSDFRIKH (89 aa)) enclose the Acylphosphatase-like domain. Active-site residues include R18 and N36.

The protein belongs to the acylphosphatase family.

The catalysed reaction is an acyl phosphate + H2O = a carboxylate + phosphate + H(+). The sequence is that of Acylphosphatase (acyP) from Dehalococcoides mccartyi (strain CBDB1).